The following is a 433-amino-acid chain: Histidinol dehydrogenase (433 aa).

NAD(+)-binding residues include Tyr-133, Gln-194, and Asn-217. 3 residues coordinate substrate: Ser-240, Gln-262, and His-265. Residues Gln-262 and His-265 each coordinate Zn(2+). Catalysis depends on proton acceptor residues Glu-330 and His-331. Substrate contacts are provided by His-331, Asp-364, Glu-418, and His-423. Asp-364 lines the Zn(2+) pocket. Zn(2+) is bound at residue His-423.

Belongs to the histidinol dehydrogenase family. The cofactor is Zn(2+).

The catalysed reaction is L-histidinol + 2 NAD(+) + H2O = L-histidine + 2 NADH + 3 H(+). Its pathway is amino-acid biosynthesis; L-histidine biosynthesis; L-histidine from 5-phospho-alpha-D-ribose 1-diphosphate: step 9/9. Its function is as follows. Catalyzes the sequential NAD-dependent oxidations of L-histidinol to L-histidinaldehyde and then to L-histidine. This chain is Histidinol dehydrogenase, found in Dechloromonas aromatica (strain RCB).